Reading from the N-terminus, the 298-residue chain is Acetylglutamate kinase (298 aa).

Residues 69–70 (GG), Arg-91, and Asn-196 contribute to the substrate site.

Belongs to the acetylglutamate kinase family. ArgB subfamily.

It is found in the cytoplasm. It catalyses the reaction N-acetyl-L-glutamate + ATP = N-acetyl-L-glutamyl 5-phosphate + ADP. Its pathway is amino-acid biosynthesis; L-arginine biosynthesis; N(2)-acetyl-L-ornithine from L-glutamate: step 2/4. Its function is as follows. Catalyzes the ATP-dependent phosphorylation of N-acetyl-L-glutamate. The protein is Acetylglutamate kinase of Bradyrhizobium sp. (strain ORS 278).